The sequence spans 404 residues: Cysteine desulfurase IscS (404 aa).

Pyridoxal 5'-phosphate contacts are provided by residues 75–76 (AT), asparagine 155, glutamine 183, and 203–205 (SAH). Lysine 206 is subject to N6-(pyridoxal phosphate)lysine. Residue threonine 243 participates in pyridoxal 5'-phosphate binding. Cysteine 328 acts as the Cysteine persulfide intermediate in catalysis. Cysteine 328 is a [2Fe-2S] cluster binding site.

The protein belongs to the class-V pyridoxal-phosphate-dependent aminotransferase family. NifS/IscS subfamily. In terms of assembly, homodimer. Forms a heterotetramer with IscU, interacts with other sulfur acceptors. It depends on pyridoxal 5'-phosphate as a cofactor.

It localises to the cytoplasm. The catalysed reaction is (sulfur carrier)-H + L-cysteine = (sulfur carrier)-SH + L-alanine. Its pathway is cofactor biosynthesis; iron-sulfur cluster biosynthesis. In terms of biological role, master enzyme that delivers sulfur to a number of partners involved in Fe-S cluster assembly, tRNA modification or cofactor biosynthesis. Catalyzes the removal of elemental sulfur atoms from cysteine to produce alanine. Functions as a sulfur delivery protein for Fe-S cluster synthesis onto IscU, an Fe-S scaffold assembly protein, as well as other S acceptor proteins. In Vesicomyosocius okutanii subsp. Calyptogena okutanii (strain HA), this protein is Cysteine desulfurase IscS.